A 142-amino-acid polypeptide reads, in one-letter code: Galactose-6-phosphate isomerase subunit LacA (142 aa).

This sequence belongs to the LacAB/RpiB family. As to quaternary structure, heteromultimeric protein consisting of LacA and LacB.

It catalyses the reaction aldehydo-D-galactose 6-phosphate = keto-D-tagatose 6-phosphate. It functions in the pathway carbohydrate metabolism; D-galactose 6-phosphate degradation; D-tagatose 6-phosphate from D-galactose 6-phosphate: step 1/1. This Staphylococcus aureus (strain JH9) protein is Galactose-6-phosphate isomerase subunit LacA.